Consider the following 517-residue polypeptide: Maturase K (517 aa).

This sequence belongs to the intron maturase 2 family. MatK subfamily.

It is found in the plastid. Its subcellular location is the chloroplast. In terms of biological role, usually encoded in the trnK tRNA gene intron. Probably assists in splicing its own and other chloroplast group II introns. The protein is Maturase K of Trillium grandiflorum (Large-flowered trillium).